We begin with the raw amino-acid sequence, 301 residues long: Diaminopimelate epimerase (301 aa).

Substrate is bound by residues Asn15, Gln47, and Asn67. Residue Cys76 is the Proton donor of the active site. Substrate contacts are provided by residues 77–78 (GN), Asn163, Asn197, and 215–216 (ER). Cys224 functions as the Proton acceptor in the catalytic mechanism. A substrate-binding site is contributed by 225–226 (GS). The disordered stretch occupies residues 280 to 301 (SGSLDPSTGLWSRDGTQEAGAR).

The protein belongs to the diaminopimelate epimerase family. In terms of assembly, homodimer.

It localises to the cytoplasm. The catalysed reaction is (2S,6S)-2,6-diaminopimelate = meso-2,6-diaminopimelate. It functions in the pathway amino-acid biosynthesis; L-lysine biosynthesis via DAP pathway; DL-2,6-diaminopimelate from LL-2,6-diaminopimelate: step 1/1. Its function is as follows. Catalyzes the stereoinversion of LL-2,6-diaminopimelate (L,L-DAP) to meso-diaminopimelate (meso-DAP), a precursor of L-lysine and an essential component of the bacterial peptidoglycan. This chain is Diaminopimelate epimerase, found in Rhizobium leguminosarum bv. trifolii (strain WSM2304).